The primary structure comprises 413 residues: Azaphilone biosynthesis cluster protein M (413 aa).

Residues 123–138 (STQPDQVQPNQPTPSF) show a composition bias toward polar residues. Positions 123 to 145 (STQPDQVQPNQPTPSFESAAGAS) are disordered.

Its pathway is secondary metabolite biosynthesis. Part of the gene cluster that mediates the biosynthesis of azaterrilone A and other azaphilones, a class of fungal metabolites characterized by a highly oxygenated pyrano-quinone bicyclic core and exhibiting a broad range of bioactivities. The first step of the pathway begins with the non-reducing polyketide synthase tazA that assembles one acetyl-CoA starter unit, five malonyl-CoA units, and catalyzes a series of Claisen condensations, methylation, PT-mediated cyclization, and finally releases the first hexaketide precursor through the R-domain. The tazA product then undergoes reduction on its terminal ketone and the following pyran-ring formation by yet undetermined enzyme(s). Dehydration and enoyl reduction, possibly involving the trans-enoyl reductase tazE leads to the next intermediate. TazD is predicted as an acetyltransferase and might catalyze the acetylation steps leading to the synthesis of azaterrilone A. Azaterrilone A is not the final product of the taz pathway and both the highly reducing polyketide synthase tazB and the dual enzyme tazHJ catalyze late steps of the pathway, leading to the production of the 2 final stereoisomers that contain additional polyketide modification whose structures have still to be determined. This is Azaphilone biosynthesis cluster protein M from Aspergillus terreus (strain NIH 2624 / FGSC A1156).